The following is a 151-amino-acid chain: Chaperonin GroEL (151 aa).

ATP is bound at residue Asp-41–Thr-45.

This sequence belongs to the chaperonin (HSP60) family. As to quaternary structure, forms a cylinder of 14 subunits composed of two heptameric rings stacked back-to-back. Interacts with the co-chaperonin GroES.

The protein resides in the cytoplasm. The enzyme catalyses ATP + H2O + a folded polypeptide = ADP + phosphate + an unfolded polypeptide.. Its function is as follows. Together with its co-chaperonin GroES, plays an essential role in assisting protein folding. The GroEL-GroES system forms a nano-cage that allows encapsulation of the non-native substrate proteins and provides a physical environment optimized to promote and accelerate protein folding. In Mycobacterium marinum, this protein is Chaperonin GroEL.